Reading from the N-terminus, the 331-residue chain is Ketol-acid reductoisomerase (NADP(+)) (331 aa).

Residues 2 to 182 (AKLFYDSDAD…GGTRAGILET (181 aa)) enclose the KARI N-terminal Rossmann domain. NADP(+)-binding positions include 25–28 (YGSQ), Ser51, Ser53, and 83–86 (DEFQ). His108 is a catalytic residue. Gly134 lines the NADP(+) pocket. A KARI C-terminal knotted domain is found at 183–328 (NFKEETETDL…KTLRSMFSWL (146 aa)). Positions 191, 195, 227, and 231 each coordinate Mg(2+). Ser252 contributes to the substrate binding site.

This sequence belongs to the ketol-acid reductoisomerase family. Requires Mg(2+) as cofactor.

It carries out the reaction (2R)-2,3-dihydroxy-3-methylbutanoate + NADP(+) = (2S)-2-acetolactate + NADPH + H(+). The catalysed reaction is (2R,3R)-2,3-dihydroxy-3-methylpentanoate + NADP(+) = (S)-2-ethyl-2-hydroxy-3-oxobutanoate + NADPH + H(+). The protein operates within amino-acid biosynthesis; L-isoleucine biosynthesis; L-isoleucine from 2-oxobutanoate: step 2/4. It participates in amino-acid biosynthesis; L-valine biosynthesis; L-valine from pyruvate: step 2/4. Its function is as follows. Involved in the biosynthesis of branched-chain amino acids (BCAA). Catalyzes an alkyl-migration followed by a ketol-acid reduction of (S)-2-acetolactate (S2AL) to yield (R)-2,3-dihydroxy-isovalerate. In the isomerase reaction, S2AL is rearranged via a Mg-dependent methyl migration to produce 3-hydroxy-3-methyl-2-ketobutyrate (HMKB). In the reductase reaction, this 2-ketoacid undergoes a metal-dependent reduction by NADPH to yield (R)-2,3-dihydroxy-isovalerate. This chain is Ketol-acid reductoisomerase (NADP(+)), found in Prochlorococcus marinus (strain NATL1A).